Here is a 302-residue protein sequence, read N- to C-terminus: tRNA dimethylallyltransferase (302 aa).

An ATP-binding site is contributed by 10-17; the sequence is GPTATGKS. Position 12–17 (12–17) interacts with substrate; sequence TATGKS. An interaction with substrate tRNA region spans residues 35–38; that stretch reads DSRQ.

This sequence belongs to the IPP transferase family. As to quaternary structure, monomer. Mg(2+) is required as a cofactor.

The catalysed reaction is adenosine(37) in tRNA + dimethylallyl diphosphate = N(6)-dimethylallyladenosine(37) in tRNA + diphosphate. Functionally, catalyzes the transfer of a dimethylallyl group onto the adenine at position 37 in tRNAs that read codons beginning with uridine, leading to the formation of N6-(dimethylallyl)adenosine (i(6)A). The protein is tRNA dimethylallyltransferase of Acaryochloris marina (strain MBIC 11017).